The following is a 249-amino-acid chain: MKITLVGNGRMGRQIADVVAASGAHVVNRVLDVNDTIDAAAFSGSDVIIDFTVRSAFLANYPALIASGVPVVVGTTGWDDVMPQVREEVVKARSTMLYSANYSLGVNIFFRTLREAARLIAPFEQFDIALSEQHHTGKADFPSGTAIKAADEILNSNPRKRTIVRELQEGRKLQSDELQVASIRLGSVFGVHSAIIDSESDTIELTHTAKNRTGFASGAVRAAEWLVQRHATSPGFYTMDDFLNDLFSA.

NAD(+)-binding positions include aspartate 32, 74-76 (GTT), and 99-102 (SANY). Histidine 134 acts as the Proton donor/acceptor in catalysis. Histidine 135 serves as a coordination point for (S)-2,3,4,5-tetrahydrodipicolinate. Lysine 138 acts as the Proton donor in catalysis. 144 to 145 (GT) contributes to the (S)-2,3,4,5-tetrahydrodipicolinate binding site.

It belongs to the DapB family.

It is found in the cytoplasm. The catalysed reaction is (S)-2,3,4,5-tetrahydrodipicolinate + NAD(+) + H2O = (2S,4S)-4-hydroxy-2,3,4,5-tetrahydrodipicolinate + NADH + H(+). It catalyses the reaction (S)-2,3,4,5-tetrahydrodipicolinate + NADP(+) + H2O = (2S,4S)-4-hydroxy-2,3,4,5-tetrahydrodipicolinate + NADPH + H(+). It functions in the pathway amino-acid biosynthesis; L-lysine biosynthesis via DAP pathway; (S)-tetrahydrodipicolinate from L-aspartate: step 4/4. Functionally, catalyzes the conversion of 4-hydroxy-tetrahydrodipicolinate (HTPA) to tetrahydrodipicolinate. This chain is 4-hydroxy-tetrahydrodipicolinate reductase, found in Chlorobaculum tepidum (strain ATCC 49652 / DSM 12025 / NBRC 103806 / TLS) (Chlorobium tepidum).